A 372-amino-acid polypeptide reads, in one-letter code: Anhydro-N-acetylmuramic acid kinase (372 aa).

ATP is bound at residue Gly18–Asp25.

It belongs to the anhydro-N-acetylmuramic acid kinase family.

It catalyses the reaction 1,6-anhydro-N-acetyl-beta-muramate + ATP + H2O = N-acetyl-D-muramate 6-phosphate + ADP + H(+). Its pathway is amino-sugar metabolism; 1,6-anhydro-N-acetylmuramate degradation. It participates in cell wall biogenesis; peptidoglycan recycling. Catalyzes the specific phosphorylation of 1,6-anhydro-N-acetylmuramic acid (anhMurNAc) with the simultaneous cleavage of the 1,6-anhydro ring, generating MurNAc-6-P. Is required for the utilization of anhMurNAc either imported from the medium or derived from its own cell wall murein, and thus plays a role in cell wall recycling. This is Anhydro-N-acetylmuramic acid kinase from Thiobacillus denitrificans (strain ATCC 25259 / T1).